A 585-amino-acid polypeptide reads, in one-letter code: Arginine--tRNA ligase (585 aa).

Residues 131–141 (ANPTGPMHVGH) carry the 'HIGH' region motif.

It belongs to the class-I aminoacyl-tRNA synthetase family. Monomer.

It is found in the cytoplasm. The enzyme catalyses tRNA(Arg) + L-arginine + ATP = L-arginyl-tRNA(Arg) + AMP + diphosphate. The polypeptide is Arginine--tRNA ligase (Bartonella bacilliformis (strain ATCC 35685 / KC583 / Herrer 020/F12,63)).